The sequence spans 253 residues: Indole-3-glycerol phosphate synthase (253 aa).

Belongs to the TrpC family.

The enzyme catalyses 1-(2-carboxyphenylamino)-1-deoxy-D-ribulose 5-phosphate + H(+) = (1S,2R)-1-C-(indol-3-yl)glycerol 3-phosphate + CO2 + H2O. It participates in amino-acid biosynthesis; L-tryptophan biosynthesis; L-tryptophan from chorismate: step 4/5. The polypeptide is Indole-3-glycerol phosphate synthase (Bacillus cereus (strain ZK / E33L)).